A 126-amino-acid polypeptide reads, in one-letter code: E3 ubiquitin-protein ligase PPP1R11 (126 aa).

The interval 1 to 25 is disordered; sequence MAEAGAGLSETVTETTVTVTTEPEN. N-acetylalanine is present on Ala-2. A compositionally biased stretch (low complexity) spans 10 to 22; it reads ETVTETTVTVTTE. An atypical RING finger domain 1 region spans residues 52–62; the sequence is HMGRRSSKCCC. Positions 70-126 are disordered; it reads FGESSTESDEEEEEGCGHTHCVRGHRKGRRRATLGPTPTTPPQPPDPSQPPPGPMQH. A phosphoserine mark is found at Ser-73 and Ser-74. Thr-75 is subject to Phosphothreonine. Phosphoserine is present on Ser-77. Residues 85–94 are atypical RING finger domain 2; sequence CGHTHCVRGH. The segment covering 89 to 101 has biased composition (basic residues); the sequence is HCVRGHRKGRRRA. The segment covering 107 to 126 has biased composition (pro residues); that stretch reads PTTPPQPPDPSQPPPGPMQH. Thr-109 carries the phosphothreonine modification.

In terms of assembly, interacts with TLR2 and UBE2D2. In terms of processing, auto-ubiquitinated. Widely expressed.

It carries out the reaction S-ubiquitinyl-[E2 ubiquitin-conjugating enzyme]-L-cysteine + [acceptor protein]-L-lysine = [E2 ubiquitin-conjugating enzyme]-L-cysteine + N(6)-ubiquitinyl-[acceptor protein]-L-lysine.. Its pathway is protein modification; protein ubiquitination. In terms of biological role, atypical E3 ubiquitin-protein ligase which ubiquitinates TLR2 at 'Lys-754' leading to its degradation by the proteasome. Plays a role in regulating inflammatory cytokine release and gram-positive bacterial clearance by functioning, in part, through the ubiquitination and degradation of TLR2. Inhibitor of protein phosphatase 1. The sequence is that of E3 ubiquitin-protein ligase PPP1R11 (PPP1R11) from Homo sapiens (Human).